The sequence spans 458 residues: Protein adenylyltransferase FICD (458 aa).

The Cytoplasmic portion of the chain corresponds to 1–23; the sequence is MILMPMASVVAVAEPKWVSVWGR. Residues 24 to 44 traverse the membrane as a helical; Signal-anchor for type II membrane protein segment; sequence FLWMTLLSMALGSLLALLLPL. The Lumenal portion of the chain corresponds to 45-458; that stretch reads GAVEEQCLAV…GFKETLPVRP (414 aa). At S79 the chain carries O-AMP-serine; by autocatalysis. T80 is subject to O-AMP-threonine; by autocatalysis. TPR repeat units lie at residues 106 to 139 and 140 to 173; these read AKAA…DPGF and VDAL…SPFH. T183 bears the O-AMP-threonine; by autocatalysis mark. The Inhibitory (S/T)XXXE(G/N) motif signature appears at 230–235; it reads TVAIEG. Residue E234 participates in ATP binding. N275 is a glycosylation site (N-linked (GlcNAc...) asparagine). Residues 285 to 420 enclose the Fido domain; sequence VTIDHMLEIH…VRPFIRFIAK (136 aa). Residue 316–319 coordinates ATP; that stretch reads VGHH. H363 is a catalytic residue. ATP is bound by residues 367 to 374, 399 to 400, and N407; these read DGNGRTSR and YY.

This sequence belongs to the fic family. As to quaternary structure, homodimer. Interacts with HD. It depends on Mg(2+) as a cofactor. Requires Mn(2+) as cofactor. Auto-AMPylated in vitro.

It is found in the endoplasmic reticulum membrane. The enzyme catalyses L-tyrosyl-[protein] + ATP = O-(5'-adenylyl)-L-tyrosyl-[protein] + diphosphate. The catalysed reaction is 3-O-(5'-adenylyl)-L-threonyl-[protein] + H2O = L-threonyl-[protein] + AMP + H(+). It catalyses the reaction L-threonyl-[protein] + ATP = 3-O-(5'-adenylyl)-L-threonyl-[protein] + diphosphate. With respect to regulation, the side chain of Glu-234 determines which of the two opposing activities (AMPylase or de-AMPylase) will take place. In response to endoplasmic reticulum stress, mediates de-AMPylase activity. Adenylyltransferase activity is inhibited by the inhibitory helix present at the N-terminus: Glu-234 binds ATP and competes with ATP-binding at Arg-374, thereby preventing adenylyltransferase activity. In unstressed cells, disengagement of Glu-234 promotes adenylyltransferase activity. Activation dissociates ATP-binding from Glu-234, allowing ordered binding of the entire ATP moiety with the alpha-phosphate in an orientation that is productive for accepting an incoming target hydroxyl side chain. Protein that can both mediate the addition of adenosine 5'-monophosphate (AMP) to specific residues of target proteins (AMPylation), and the removal of the same modification from target proteins (de-AMPylation), depending on the context. The side chain of Glu-231 determines which of the two opposing activities (AMPylase or de-AMPylase) will take place. Acts as a key regulator of the ERN1/IRE1-mediated unfolded protein response (UPR) by mediating AMPylation or de-AMPylation of HSPA5/BiP. In unstressed cells, acts as an adenylyltransferase by mediating AMPylation of HSPA5/BiP at 'Thr-518', thereby inactivating it. In response to endoplasmic reticulum stress, acts as a phosphodiesterase by mediating removal of ATP (de-AMPylation) from HSPA5/BiP at 'Thr-518', leading to restore HSPA5/BiP activity. Although it is able to AMPylate RhoA, Rac and Cdc42 Rho GTPases in vitro, Rho GTPases do not constitute physiological substrates. This chain is Protein adenylyltransferase FICD, found in Rattus norvegicus (Rat).